Here is a 203-residue protein sequence, read N- to C-terminus: Glycerol-3-phosphate acyltransferase (203 aa).

Transmembrane regions (helical) follow at residues 4–24 (LVLL…AVLI), 80–100 (PFLL…PIFF), 116–136 (APIG…TVFI), and 138–158 (GYSS…TWFV).

It belongs to the PlsY family. In terms of assembly, probably interacts with PlsX.

It is found in the cell inner membrane. It carries out the reaction an acyl phosphate + sn-glycerol 3-phosphate = a 1-acyl-sn-glycero-3-phosphate + phosphate. It functions in the pathway lipid metabolism; phospholipid metabolism. Functionally, catalyzes the transfer of an acyl group from acyl-phosphate (acyl-PO(4)) to glycerol-3-phosphate (G3P) to form lysophosphatidic acid (LPA). This enzyme utilizes acyl-phosphate as fatty acyl donor, but not acyl-CoA or acyl-ACP. This Photobacterium profundum (strain SS9) protein is Glycerol-3-phosphate acyltransferase.